A 217-amino-acid polypeptide reads, in one-letter code: KS1 protein (217 aa).

The N-terminal stretch at 1–16 is a signal peptide; it reads MKLIIVLVMMLVCVYS. Positions 24-47 are enriched in basic and acidic residues; it reads PKNHEVPAKKQFAETKVEKKKRSD. Disordered stretches follow at residues 24 to 58 and 72 to 205; these read PKNH…DDDD and EDDD…LKIK. 2 tandem repeats follow at residues 32–81 and 98–147. The segment at 32–147 is 2 X 50 AA approximate repeats; the sequence is KKQFAETKVE…EEDDDCYDED (116 aa). 2 stretches are compositionally biased toward acidic residues: residues 48–58 and 72–94; these read DGDEEICDDDD and EDDD…DDCQ. A compositionally biased stretch (basic residues) spans 98–110; that stretch reads KKKKRETKPKLKK. Over residues 114–145 the composition is skewed to acidic residues; that stretch reads DEEEEECEEDDEDCEVEVDIEECDEEDDDCYD. Basic residues predominate over residues 149–188; that stretch reads KKKKENKLKKESKKKNSKKTVPKNAKKSSKRSTSTKKTSQ.

As to expression, expressed in tentacle-specific epithelial cells (battery cells) as well as in a small fraction of ectodermal epithelial cells in the gastric region subjacent to the tentacles (the tentacle formation region). The later cells are committed to become battery cells.

Responds to early signals of head formation in hydra. This is KS1 protein (KS1) from Hydra vulgaris (Hydra).